A 642-amino-acid chain; its full sequence is Threonine--tRNA ligase (642 aa).

The TGS domain occupies 1–61; that stretch reads MPVITLPDGS…ENDATLAIIT (61 aa). Residues 243-534 form a catalytic region; the sequence is DHRKIGKQLD…LTEEFAGFFP (292 aa). Zn(2+)-binding residues include cysteine 334, histidine 385, and histidine 511.

Belongs to the class-II aminoacyl-tRNA synthetase family. In terms of assembly, homodimer. Requires Zn(2+) as cofactor.

It localises to the cytoplasm. The enzyme catalyses tRNA(Thr) + L-threonine + ATP = L-threonyl-tRNA(Thr) + AMP + diphosphate + H(+). Functionally, catalyzes the attachment of threonine to tRNA(Thr) in a two-step reaction: L-threonine is first activated by ATP to form Thr-AMP and then transferred to the acceptor end of tRNA(Thr). Also edits incorrectly charged L-seryl-tRNA(Thr). This chain is Threonine--tRNA ligase, found in Salmonella gallinarum (strain 287/91 / NCTC 13346).